A 745-amino-acid polypeptide reads, in one-letter code: Inhibitor of nuclear factor kappa-B kinase subunit alpha (745 aa).

The Protein kinase domain maps to 15–302; the sequence is WEMRERLGTG…LTLKQPRCFV (288 aa). ATP is bound by residues 21–29 and Lys-44; that span reads LGTGGFGNV. Thr-23 carries the post-translational modification Phosphothreonine; by PKB/AKT1 and SGK1. Asp-144 acts as the Proton acceptor in catalysis. Ser-176 carries the phosphoserine; by MAP3K14 modification. Position 179 is a (Microbial infection) O-acetylthreonine; by Yersinia YopJ (Thr-179). Ser-180 is modified (phosphoserine; by SGK1). The leucine-zipper stretch occupies residues 455–476; that stretch reads LLRYNANLTKMKNTLISASQQL. An NEMO-binding region spans residues 738-743; it reads LDWSWL.

This sequence belongs to the protein kinase superfamily. Ser/Thr protein kinase family. I-kappa-B kinase subfamily. Component of the I-kappa-B-kinase (IKK) core complex consisting of CHUK, IKBKB and IKBKG; probably four alpha/CHUK-beta/IKBKB dimers are associated with four gamma/IKBKG subunits. The IKK core complex seems to associate with regulatory or adapter proteins to form a IKK-signalosome holo-complex. The IKK complex associates with TERF2IP/RAP1, leading to promote IKK-mediated phosphorylation of RELA/p65. Part of a complex composed of NCOA2, NCOA3, CHUK/IKKA, IKBKB, IKBKG and CREBBP. Part of a 70-90 kDa complex at least consisting of CHUK/IKKA, IKBKB, NFKBIA, RELA, ELP1 and MAP3K14. Directly interacts with TRPC4AP. May interact with TRAF2. Interacts with NALP2. May interact with MAVS/IPS1. Interacts with ARRB1 and ARRB2. Interacts with NLRC5; prevents CHUK phosphorylation and kinase activity. Interacts with PIAS1; this interaction induces PIAS1 phosphorylation. Interacts with ZNF268 isoform 2; the interaction is further increased in a TNF-alpha-dependent manner. Interacts with FOXO3. Interacts with IFIT5; the interaction synergizes the recruitment of IKK to MAP3K7 and enhances IKK phosphorylation. Interacts with LRRC14. Interacts with SASH1. Directly interacts with DDX3X after the physiological activation of the TLR7 and TLR8 pathways; this interaction enhances CHUK autophosphorylation. In terms of assembly, (Microbial infection) Interacts with InlC of Listeria monocytogenes. Phosphorylated by MAP3K14/NIK, AKT and to a lesser extent by MEKK1, and dephosphorylated by PP2A. Autophosphorylated. In terms of processing, ubiquitinated by TRIM56 via 'Lys-63'-linked ubiquitination, promoting activation of CHUK/IKKA. Post-translationally, (Microbial infection) Acetylation of Thr-179 by Yersinia YopJ prevents phosphorylation and activation, thus blocking the I-kappa-B signaling pathway. As to expression, widely expressed.

The protein localises to the cytoplasm. It localises to the nucleus. It carries out the reaction L-seryl-[I-kappa-B protein] + ATP = O-phospho-L-seryl-[I-kappa-B protein] + ADP + H(+). With respect to regulation, activated when phosphorylated and inactivated when dephosphorylated. Its function is as follows. Serine kinase that plays an essential role in the NF-kappa-B signaling pathway which is activated by multiple stimuli such as inflammatory cytokines, bacterial or viral products, DNA damages or other cellular stresses. Acts as a part of the canonical IKK complex in the conventional pathway of NF-kappa-B activation and phosphorylates inhibitors of NF-kappa-B on serine residues. These modifications allow polyubiquitination of the inhibitors and subsequent degradation by the proteasome. In turn, free NF-kappa-B is translocated into the nucleus and activates the transcription of hundreds of genes involved in immune response, growth control, or protection against apoptosis. Negatively regulates the pathway by phosphorylating the scaffold protein TAXBP1 and thus promoting the assembly of the A20/TNFAIP3 ubiquitin-editing complex (composed of A20/TNFAIP3, TAX1BP1, and the E3 ligases ITCH and RNF11). Therefore, CHUK plays a key role in the negative feedback of NF-kappa-B canonical signaling to limit inflammatory gene activation. As part of the non-canonical pathway of NF-kappa-B activation, the MAP3K14-activated CHUK/IKKA homodimer phosphorylates NFKB2/p100 associated with RelB, inducing its proteolytic processing to NFKB2/p52 and the formation of NF-kappa-B RelB-p52 complexes. In turn, these complexes regulate genes encoding molecules involved in B-cell survival and lymphoid organogenesis. Also participates in the negative feedback of the non-canonical NF-kappa-B signaling pathway by phosphorylating and destabilizing MAP3K14/NIK. Within the nucleus, phosphorylates CREBBP and consequently increases both its transcriptional and histone acetyltransferase activities. Modulates chromatin accessibility at NF-kappa-B-responsive promoters by phosphorylating histones H3 at 'Ser-10' that are subsequently acetylated at 'Lys-14' by CREBBP. Additionally, phosphorylates the CREBBP-interacting protein NCOA3. Also phosphorylates FOXO3 and may regulate this pro-apoptotic transcription factor. Phosphorylates RIPK1 at 'Ser-25' which represses its kinase activity and consequently prevents TNF-mediated RIPK1-dependent cell death. Phosphorylates AMBRA1 following mitophagy induction, promoting AMBRA1 interaction with ATG8 family proteins and its mitophagic activity. In Homo sapiens (Human), this protein is Inhibitor of nuclear factor kappa-B kinase subunit alpha (CHUK).